The primary structure comprises 472 residues: MSRSDTDGRDTSFASRNGVGGSQLSEPPSQRRERPDYGYAVEETHRPHTAQERFPDSHGQRSAPDLYSRDSDRFSYHRGDTLTPAQERSYQRELELMKARGEQERSYGGASASRSSRPLEADHHYGGMPLTRGLVDDFAPEPMASSGRPNLEGFSRVENGRRYRLVVVQHPSRARMCGFGDKDRRPLSPTLIVKLIITEEATGEEISPCEVNTSLFLLATDLCHPDDLMLAPRNILVHHHASSLSSNPIQHGGAGGYATDEFGHRSGSSLGNFAADGGGPCDDGYRSSTHPQHASESTGAAALPLSSSSMNPYDRSPHASSSIQFGGGGNFAQQSQAESYTRNLVGAAVASASVLKDEQDKWCTFFVFQDISVRTEGVYRIKLMFVNLEVSGRVGTGVADALAETYTDAFTVYSPRRFPGMLDPTPLSRKLASQGIKIPVRNDKKKQRRRNDEGGDGMGDYDGASGGDEDDE.

Basic and acidic residues-rich tracts occupy residues 1–10, 29–59, 67–80, and 89–105; these read MSRSDTDGRD, SQRR…DSHG, YSRD…HRGD, and SYQR…EQER. Disordered stretches follow at residues 1 to 121, 281 to 327, and 433 to 472; these read MSRS…PLEA, CDDG…QFGG, and SQGI…EDDE. Over residues 106–116 the composition is skewed to low complexity; the sequence is SYGGASASRSS. One can recognise a Velvet domain in the interval 158–441; it reads ENGRRYRLVV…ASQGIKIPVR (284 aa). A compositionally biased stretch (polar residues) spans 286-298; that stretch reads RSSTHPQHASEST. A compositionally biased stretch (gly residues) spans 456 to 466; it reads DGMGDYDGASG.

It belongs to the velvet family. VelB subfamily. In terms of assembly, component of the heterotrimeric velvet complex composed of laeA, veA and velB; VeA acting as a bridging protein between laeA and velB. Forms a heterodimeric complex with vosA; the formation of the velB-vosA complex is light-dependent.

It localises to the nucleus. Its subcellular location is the cytoplasm. Its function is as follows. Component of the velvet transcription factor complex that controls sexual/asexual developmental ratio in response to light, promoting sexual development in the darkness while stimulating asexual sporulation under illumination. The velvet complex acts as a global regulator for secondary metabolite gene expression. Component of the velB-VosA heterodimeric complex that plays a dual role in activating genes associated with spore maturation and repressing certain development-associated genes. The velB-VosA complex binds DNA through the DNA-binding domain of vosA that recognizes an 11-nucleotide consensus sequence 5'-CTGGCCGCGGC-3' consisting of two motifs in the promoters of key developmental regulatory genes. Required for full virulence on seedlings. This chain is Velvet complex subunit umv2, found in Mycosarcoma maydis (Corn smut fungus).